Here is a 916-residue protein sequence, read N- to C-terminus: Probable serine/threonine-protein kinase DDB_G0267514 (916 aa).

3 disordered regions span residues 283–311 (SGGG…SGGS), 461–518 (NNNQ…SPLD), and 550–646 (FNNQ…EPPS). Low complexity-rich tracts occupy residues 461 to 493 (NNNQ…QQQP) and 550 to 622 (FNNQ…LINN). Over residues 623 to 646 (HSPNQYNNQGNILKNSGSVVEPPS) the composition is skewed to polar residues. The region spanning 662–916 (LKISSKLGEG…EILNLLNEIP (255 aa)) is the Protein kinase domain. ATP is bound by residues 668 to 676 (LGEGTFGVV) and Lys-689. The Proton acceptor role is filled by Asp-784.

The protein belongs to the protein kinase superfamily. TKL Ser/Thr protein kinase family.

It carries out the reaction L-seryl-[protein] + ATP = O-phospho-L-seryl-[protein] + ADP + H(+). It catalyses the reaction L-threonyl-[protein] + ATP = O-phospho-L-threonyl-[protein] + ADP + H(+). The sequence is that of Probable serine/threonine-protein kinase DDB_G0267514 from Dictyostelium discoideum (Social amoeba).